Consider the following 363-residue polypeptide: Cytochrome b (363 aa).

4 helical membrane passes run 23–43 (FGFI…MLSF), 67–89 (WFVR…LHIM), 102–122 (SWYS…VGYV), and 164–184 (FFSI…FHLY). The heme b site is built by His-73 and His-87. 2 residues coordinate heme b: His-168 and His-182. His-187 contributes to the a ubiquinone binding site. A run of 4 helical transmembrane segments spans residues 210–230 (VLFS…VQSG), 271–291 (VFPT…LLVL), 310–330 (VWTT…SIGK), and 332–352 (VVHV…VLFI).

Belongs to the cytochrome b family. The main subunits of complex b-c1 are: cytochrome b, cytochrome c1 and the Rieske protein. It depends on heme b as a cofactor.

It localises to the mitochondrion inner membrane. Component of the ubiquinol-cytochrome c reductase complex (complex III or cytochrome b-c1 complex) that is part of the mitochondrial respiratory chain. The b-c1 complex mediates electron transfer from ubiquinol to cytochrome c. Contributes to the generation of a proton gradient across the mitochondrial membrane that is then used for ATP synthesis. The polypeptide is Cytochrome b (MT-CYB) (Theileria annulata).